Here is a 480-residue protein sequence, read N- to C-terminus: MTFEIPDFMPVIPELFVLGMACAILVIDLFVPQSRRDITYGLSQFTLIGAAILTIALASPETRFTFNDTFIADGLSDLLKVAVYLITAVVFLYSRPYLQDRDIYKGEYYVLGLFGVLGMMIMISSYSFLTLYLGLELLSLSLYAMVAFNRDSARASEAAMKYFILGAIASGMLLYGMSILYGITGSLDIKEVSDYLITSGAGLNVPLVFALSFVIVGLAFKLGAVPFHMWVPDVYHGAPTSVTLFIGTAPKLAGLAIIMRLLVDGLGPLHHDWQGMLTILAVLSLAVGNVVAIAQTNIKRMLAYSTISHVGFILMGILAGTHEGYAAALFYTLVYAIVAAGGFGMIILLSRRGFEAENLDDFRGLNERSPWFAFIMLLIMFSMAGVPPTVGFYAKLAVLQAVVQVEMIWLAIFAVIFSIVGAFYYLRAVKIMYFDKPEDESPLPKALDMNVVLSINGLLVIVLGIFPGLLMSLATGAISW.

The next 13 membrane-spanning stretches (helical) occupy residues 11-31 (VIPELFVLGMACAILVIDLFV), 38-58 (ITYGLSQFTLIGAAILTIALA), 74-94 (GLSDLLKVAVYLITAVVFLYS), 109-129 (YVLGLFGVLGMMIMISSYSFL), 163-183 (FILGAIASGMLLYGMSILYGI), 200-220 (GAGLNVPLVFALSFVIVGLAF), 239-259 (PTSVTLFIGTAPKLAGLAIIM), 273-293 (WQGMLTILAVLSLAVGNVVAI), 301-321 (MLAYSTISHVGFILMGILAGT), 329-349 (LFYTLVYAIVAAGGFGMIILL), 372-392 (FAFIMLLIMFSMAGVPPTVGF), 405-425 (VEMIWLAIFAVIFSIVGAFYY), and 451-471 (VVLSINGLLVIVLGIFPGLLM).

The protein belongs to the complex I subunit 2 family. As to quaternary structure, NDH-1 is composed of 14 different subunits. Subunits NuoA, H, J, K, L, M, N constitute the membrane sector of the complex.

The protein resides in the cell inner membrane. The catalysed reaction is a quinone + NADH + 5 H(+)(in) = a quinol + NAD(+) + 4 H(+)(out). Functionally, NDH-1 shuttles electrons from NADH, via FMN and iron-sulfur (Fe-S) centers, to quinones in the respiratory chain. The immediate electron acceptor for the enzyme in this species is believed to be ubiquinone. Couples the redox reaction to proton translocation (for every two electrons transferred, four hydrogen ions are translocated across the cytoplasmic membrane), and thus conserves the redox energy in a proton gradient. This is NADH-quinone oxidoreductase subunit N from Thioalkalivibrio sulfidiphilus (strain HL-EbGR7).